We begin with the raw amino-acid sequence, 192 residues long: Superoxide dismutase [Fe] (192 aa).

Fe cation contacts are provided by histidine 27, histidine 74, aspartate 157, and histidine 161.

The protein belongs to the iron/manganese superoxide dismutase family. In terms of assembly, homodimer. It depends on Fe cation as a cofactor.

It carries out the reaction 2 superoxide + 2 H(+) = H2O2 + O2. Its function is as follows. Destroys superoxide anion radicals which are normally produced within the cells and which are toxic to biological systems. The chain is Superoxide dismutase [Fe] (sodB) from Bordetella pertussis (strain Tohama I / ATCC BAA-589 / NCTC 13251).